An 873-amino-acid chain; its full sequence is Zinc fingers and homeoboxes protein 1 (873 aa).

The disordered stretch occupies residues Leu-24–Asn-63. A Phosphothreonine modification is found at Thr-36. A phosphoserine mark is found at Ser-45, Ser-47, and Ser-48. 2 C2H2-type zinc fingers span residues Tyr-70–His-93 and Tyr-102–His-125. Residue Lys-159 forms a Glycyl lysine isopeptide (Lys-Gly) (interchain with G-Cter in SUMO2) linkage. The segment at His-200 to Thr-236 is disordered. Ser-202 bears the Phosphoserine mark. A compositionally biased stretch (basic and acidic residues) spans Asn-212 to Ile-221. Residues Glu-223–Thr-236 show a composition bias toward low complexity. Positions Asn-272 to Pro-432 are required for dimerization. Positions Asn-272–Phe-564 are required for interaction with NFYA. The segment at residues Asn-284–Glu-346 is a DNA-binding region (homeobox 1). Residues Lys-441, Lys-454, Lys-485, and Lys-629 each participate in a glycyl lysine isopeptide (Lys-Gly) (interchain with G-Cter in SUMO2) cross-link. 2 consecutive DNA-binding regions (homeobox) follow at residues Ser-464 to Gln-526 and Pro-569 to Met-630. 2 disordered regions span residues Lys-626 to Lys-667 and Ser-732 to Trp-769. Position 648 is a phosphoserine (Ser-648). The segment at residues Ser-660 to Trp-722 is a DNA-binding region (homeobox 4). Positions Met-734–Asn-768 are required for nuclear localization. The segment covering Leu-740–Lys-764 has biased composition (basic residues). The residue at position 774 (Ser-774) is a Phosphoserine. The segment at residues Lys-777–Phe-832 is a DNA-binding region (homeobox 5). Residues Ile-829–Asp-873 are disordered. Over residues Leu-831–Thr-857 the composition is skewed to acidic residues. Residues Leu-831 to Asp-873 are required for repressor activity. Positions His-863–Asp-873 are enriched in basic residues.

It belongs to the ZHX family. In terms of assembly, forms homodimers. Heterodimer (via HD1 domain) with ZHX2 (via HD1 domain). Also forms a heterodimer with ZHX3 which is a prerequisite for repressor activity. Interacts with ATF7IP and NFYA. Interacts (via homeobox domains) with DNMT3B (via PWWP domain).

The protein resides in the nucleus. In terms of biological role, acts as a transcriptional repressor. Increases DNMT3B-mediated repressive transcriptional activity when DNMT3B is tethered to DNA. May link molecule between DNMT3B and other co-repressor proteins. The protein is Zinc fingers and homeoboxes protein 1 (ZHX1) of Pan troglodytes (Chimpanzee).